The following is a 154-amino-acid chain: Myoglobin (154 aa).

Residues 2 to 148 form the Globin domain; the sequence is GLSDGEWQLV…FRNDMAAKYK (147 aa). Ser4 is modified (phosphoserine). His65 serves as a coordination point for nitrite. His65 contributes to the O2 binding site. Phosphothreonine is present on Thr68. A heme b-binding site is contributed by His94.

Belongs to the globin family. In terms of assembly, monomeric.

It localises to the cytoplasm. It is found in the sarcoplasm. The enzyme catalyses Fe(III)-heme b-[protein] + nitric oxide + H2O = Fe(II)-heme b-[protein] + nitrite + 2 H(+). It carries out the reaction H2O2 + AH2 = A + 2 H2O. Monomeric heme protein which primary function is to store oxygen and facilitate its diffusion within muscle tissues. Reversibly binds oxygen through a pentacoordinated heme iron and enables its timely and efficient release as needed during periods of heightened demand. Depending on the oxidative conditions of tissues and cells, and in addition to its ability to bind oxygen, it also has a nitrite reductase activity whereby it regulates the production of bioactive nitric oxide. Under stress conditions, like hypoxia and anoxia, it also protects cells against reactive oxygen species thanks to its pseudoperoxidase activity. The polypeptide is Myoglobin (MB) (Aotus trivirgatus (Three-striped night monkey)).